The primary structure comprises 240 residues: Ribonuclease PH (240 aa).

Phosphate contacts are provided by residues R87 and 125–127 (GTR).

It belongs to the RNase PH family. Homohexameric ring arranged as a trimer of dimers.

It catalyses the reaction tRNA(n+1) + phosphate = tRNA(n) + a ribonucleoside 5'-diphosphate. Phosphorolytic 3'-5' exoribonuclease that plays an important role in tRNA 3'-end maturation. Removes nucleotide residues following the 3'-CCA terminus of tRNAs; can also add nucleotides to the ends of RNA molecules by using nucleoside diphosphates as substrates, but this may not be physiologically important. Probably plays a role in initiation of 16S rRNA degradation (leading to ribosome degradation) during starvation. This Ruminiclostridium cellulolyticum (strain ATCC 35319 / DSM 5812 / JCM 6584 / H10) (Clostridium cellulolyticum) protein is Ribonuclease PH.